The chain runs to 521 residues: GRAS family protein RAD1 (521 aa).

A GRAS domain is found at 137 to 520; the sequence is DGSCADGMRL…KPIVAVSCWK (384 aa). A leucine repeat I (LRI) region spans residues 144–212; the sequence is MRLVQLLIAC…PIGNNSAGSD (69 aa). The tract at residues 231–301 is VHIID; the sequence is FKLVYENCPH…HRVRRLRITA (71 aa). The VHIID motif lies at 262-266; that stretch reads LHVVD. Residues 311-343 form a leucine repeat II (LRII) region; sequence VIGEELSIYAKNLGIHLEFSIVEKNLENLKPKD. Residues 352–443 form a PFYRE region; it reads LVVNSILQLH…QFYFAEEIKN (92 aa). The segment at 446–520 is SAW; that stretch reads SCEGPLRMER…KPIVAVSCWK (75 aa).

Belongs to the GRAS family. As to quaternary structure, interacts with RAM1. Interacts with NSP2.

It is found in the nucleus. Its function is as follows. Transcription factor acting as a regulator of arbuscular mycorrhiza (AM)-related genes (e.g. STR). Required for the morphogenesis of arbuscules upon symbiosis with AM fungi (e.g. Glomus versiforme). Also involved in restricting mycorrhizal colonization of the root meristem. The protein is GRAS family protein RAD1 of Medicago truncatula (Barrel medic).